The sequence spans 323 residues: ADP-L-glycero-D-manno-heptose-6-epimerase (323 aa).

NADP(+) contacts are provided by residues 10 to 11, 31 to 32, K38, K53, 75 to 79, and N92; these read FI, DN, and EGACS. Residue Y139 is the Proton acceptor of the active site. K143 lines the NADP(+) pocket. N168 serves as a coordination point for substrate. NADP(+) is bound by residues V169 and K177. K177 acts as the Proton acceptor in catalysis. Substrate is bound by residues D179, K186, 200 to 203, R213, and Y277; that span reads FGAY.

Belongs to the NAD(P)-dependent epimerase/dehydratase family. HldD subfamily. In terms of assembly, homopentamer. NADP(+) serves as cofactor.

The enzyme catalyses ADP-D-glycero-beta-D-manno-heptose = ADP-L-glycero-beta-D-manno-heptose. It functions in the pathway nucleotide-sugar biosynthesis; ADP-L-glycero-beta-D-manno-heptose biosynthesis; ADP-L-glycero-beta-D-manno-heptose from D-glycero-beta-D-manno-heptose 7-phosphate: step 4/4. Functionally, catalyzes the interconversion between ADP-D-glycero-beta-D-manno-heptose and ADP-L-glycero-beta-D-manno-heptose via an epimerization at carbon 6 of the heptose. In Hydrogenovibrio crunogenus (strain DSM 25203 / XCL-2) (Thiomicrospira crunogena), this protein is ADP-L-glycero-D-manno-heptose-6-epimerase.